Consider the following 314-residue polypeptide: Olfactory receptor 1 (314 aa).

Topologically, residues 1-29 (MTERNQTVISQFLLLGLPIPPEHQHVFYA) are extracellular. Residue Asn-5 is glycosylated (N-linked (GlcNAc...) asparagine). Residues 30–50 (LFLSMYLTTVLGNLIIIILIL) form a helical membrane-spanning segment. Residues 51 to 59 (LDSHLHTPM) lie on the Cytoplasmic side of the membrane. Residues 60 to 81 (YLFLSNLSFSDLCFSSVTMPKL) form a helical membrane-spanning segment. Residues 82-97 (LQNMQSQVPSIPYAGC) are Extracellular-facing. Cys-97 and Cys-179 form a disulfide bridge. A helical transmembrane segment spans residues 98–118 (LSQIYFFLFFGDLGNFLLVAM). Over 119–143 (AYDRYVAICFPLHYMSIMSPKLCVS) the chain is Cytoplasmic. A helical membrane pass occupies residues 144–164 (LVVLSWVLTTFHAMLHTLLMA). The Extracellular segment spans residues 165-196 (RLSFCEDNVIPHFFCDMSALLKLACSDTRVNE). The chain crosses the membrane as a helical span at residues 197–217 (VVIFIVVSLFLVLPFALIIMS). At 218–240 (YVRIVSSILKVPSSQGIYKAFST) the chain is on the cytoplasmic side. A helical transmembrane segment spans residues 241–261 (CGSHLSVVSLFYGTVIGLYLC). Topologically, residues 262-271 (PSSNNSTVKE) are extracellular. N-linked (GlcNAc...) asparagine glycans are attached at residues Asn-265 and Asn-266. The helical transmembrane segment at 272 to 292 (TVMSLMYTVVTPMLNPFIYSL) threads the bilayer. Residues 293 to 314 (RNRDIKGAMERIFCKRKIQLNL) are Cytoplasmic-facing.

This sequence belongs to the G-protein coupled receptor 1 family. In terms of tissue distribution, olfactory epithelium.

It is found in the cell membrane. In terms of biological role, odorant receptor. Activated by a lily-derived aldehyde as well as other odorants. May signal through an inositol 1,4,5-trisphosphate (IP3) second messenger system. The sequence is that of Olfactory receptor 1 from Rattus norvegicus (Rat).